The chain runs to 264 residues: Endochitinase At2g43590 (264 aa).

The N-terminal stretch at 1–24 is a signal peptide; that stretch reads MAFTKISLVLLLCLLGFFSETVKS. The 35-residue stretch at 25–59 folds into the Chitin-binding type-1 domain; sequence QNCGCAPNLCCSQFGYCGTDDAYCGVGCRSGPCRG. 4 disulfides stabilise this stretch: C27–C35, C29–C41, C34–C48, and C52–C57. The segment at 66-264 is catalytic; that stretch reads GSVGSIVTQG…GVDPGPNLSC (199 aa). The Proton donor role is filled by E128. Residue N261 is glycosylated (N-linked (GlcNAc...) asparagine).

This sequence belongs to the glycosyl hydrolase 19 family. Chitinase class I subfamily.

It catalyses the reaction Random endo-hydrolysis of N-acetyl-beta-D-glucosaminide (1-&gt;4)-beta-linkages in chitin and chitodextrins.. The polypeptide is Endochitinase At2g43590 (Arabidopsis thaliana (Mouse-ear cress)).